Reading from the N-terminus, the 110-residue chain is DNA-binding protein Mlab_1482 (110 aa).

The protein belongs to the PDCD5 family.

In Methanocorpusculum labreanum (strain ATCC 43576 / DSM 4855 / Z), this protein is DNA-binding protein Mlab_1482.